A 269-amino-acid polypeptide reads, in one-letter code: Probable cytochrome c oxidase subunit 2 (269 aa).

The next 3 helical transmembrane spans lie at 8 to 28 (ITLI…PLPW), 50 to 70 (LLYI…FVCI), and 87 to 107 (ILIE…IAVP). Residues histidine 189, cysteine 224, cysteine 228, and histidine 232 each contribute to the Cu cation site.

This sequence belongs to the cytochrome c oxidase subunit 2 family. Cu cation is required as a cofactor. Heme serves as cofactor.

The protein resides in the cell membrane. The catalysed reaction is 4 Fe(II)-[cytochrome c] + O2 + 8 H(+)(in) = 4 Fe(III)-[cytochrome c] + 2 H2O + 4 H(+)(out). Functionally, subunits I and II form the functional core of the enzyme complex. Electrons originating in cytochrome c are transferred via heme a and Cu(A) to the binuclear center formed by heme a3 and Cu(B). The protein is Probable cytochrome c oxidase subunit 2 (ctaC) of Rickettsia bellii (strain RML369-C).